We begin with the raw amino-acid sequence, 323 residues long: tRNA U34 carboxymethyltransferase (323 aa).

Carboxy-S-adenosyl-L-methionine is bound by residues lysine 91, tryptophan 105, lysine 110, glycine 130, 152–154 (DPS), 181–182 (IE), methionine 196, tyrosine 200, and arginine 315.

This sequence belongs to the class I-like SAM-binding methyltransferase superfamily. CmoB family. Homotetramer.

The enzyme catalyses carboxy-S-adenosyl-L-methionine + 5-hydroxyuridine(34) in tRNA = 5-carboxymethoxyuridine(34) in tRNA + S-adenosyl-L-homocysteine + H(+). Catalyzes carboxymethyl transfer from carboxy-S-adenosyl-L-methionine (Cx-SAM) to 5-hydroxyuridine (ho5U) to form 5-carboxymethoxyuridine (cmo5U) at position 34 in tRNAs. This Vibrio atlanticus (strain LGP32) (Vibrio splendidus (strain Mel32)) protein is tRNA U34 carboxymethyltransferase.